Here is a 355-residue protein sequence, read N- to C-terminus: UDP-3-O-acylglucosamine N-acyltransferase (355 aa).

Histidine 246 acts as the Proton acceptor in catalysis.

The protein belongs to the transferase hexapeptide repeat family. LpxD subfamily. In terms of assembly, homotrimer.

It catalyses the reaction a UDP-3-O-[(3R)-3-hydroxyacyl]-alpha-D-glucosamine + a (3R)-hydroxyacyl-[ACP] = a UDP-2-N,3-O-bis[(3R)-3-hydroxyacyl]-alpha-D-glucosamine + holo-[ACP] + H(+). It functions in the pathway bacterial outer membrane biogenesis; LPS lipid A biosynthesis. Functionally, catalyzes the N-acylation of UDP-3-O-acylglucosamine using 3-hydroxyacyl-ACP as the acyl donor. Is involved in the biosynthesis of lipid A, a phosphorylated glycolipid that anchors the lipopolysaccharide to the outer membrane of the cell. The protein is UDP-3-O-acylglucosamine N-acyltransferase of Polaromonas naphthalenivorans (strain CJ2).